Here is a 238-residue protein sequence, read N- to C-terminus: Monocyte to macrophage differentiation factor (238 aa).

Over 1–28 (MRFKNRFQRFMNHRAPANGRYKPTCYEH) the chain is Cytoplasmic. Residues 29–49 (AANCYTHAFLIVPAIVGSALL) traverse the membrane as a helical segment. Residues 50-61 (HRLSDDCWEKIT) are Lumenal-facing. The helical transmembrane segment at 62–82 (AWIYGMGLCALFIVSTVFHIV) threads the bilayer. At 83–101 (SWKKSHLRTVEHCFHMCDR) the chain is on the cytoplasmic side. A helical transmembrane segment spans residues 102-122 (MVIYFFIAASYAPWLNLRELG). Over 123–124 (PL) the chain is Lumenal. A helical transmembrane segment spans residues 125–145 (ASHMRWFIWLMAAGGTIYVFL). Residues 146–151 (YHEKYK) lie on the Cytoplasmic side of the membrane. The chain crosses the membrane as a helical span at residues 152–172 (VVELFFYLTMGFSPALVVTSM). At 173 to 174 (NN) the chain is on the lumenal side. A helical membrane pass occupies residues 175–195 (TDGLQELACGGLIYCLGVVFF). Over 196-198 (KSD) the chain is Cytoplasmic. The chain crosses the membrane as a helical span at residues 199-219 (GIIPFAHAIWHLFVATAAAVH). The Lumenal portion of the chain corresponds to 220-238 (YYAIWKYLYRSPTDFMRHL).

Belongs to the ADIPOR family. In terms of tissue distribution, exhibits relatively ubiquitous expression with preferential expression in mature (in vitro differentiated) macrophages.

It localises to the late endosome membrane. Its subcellular location is the lysosome membrane. Functionally, involved in the dynamics of lysosomal membranes associated with microglial activation following brain lesion. This chain is Monocyte to macrophage differentiation factor, found in Homo sapiens (Human).